The sequence spans 1101 residues: Lysylphosphatidylglycerol biosynthesis bifunctional protein LysX (1101 aa).

The phosphatidylglycerol lysyltransferase stretch occupies residues Met1–Asp601. 7 helical membrane-spanning segments follow: residues Val18–Val38, Phe60–Ala80, Ile84–Leu104, Asp113–Ala133, Val151–Phe171, Tyr183–Ser200, and Val207–Phe227. Residues Arg602–Arg1101 are lysine--tRNA ligase. A DNA-binding region (OB) is located at residues Val662–Ile740. The Mg(2+) site is built by Asp1013 and Glu1020.

It in the N-terminal section; belongs to the LPG synthetase family. This sequence in the C-terminal section; belongs to the class-II aminoacyl-tRNA synthetase family. Requires Mg(2+) as cofactor.

The protein localises to the cell membrane. It carries out the reaction tRNA(Lys) + L-lysine + ATP = L-lysyl-tRNA(Lys) + AMP + diphosphate. It catalyses the reaction L-lysyl-tRNA(Lys) + a 1,2-diacyl-sn-glycero-3-phospho-(1'-sn-glycerol) = a 1,2-diacyl-sn-glycero-3-phospho-1'-(3'-O-L-lysyl)-sn-glycerol + tRNA(Lys). Its function is as follows. Catalyzes the production of L-lysyl-tRNA(Lys)transfer and the transfer of a lysyl group from L-lysyl-tRNA(Lys) to membrane-bound phosphatidylglycerol (PG), which produces lysylphosphatidylglycerol (LPG), one of the components of the bacterial membrane with a positive net charge. LPG synthesis contributes to the resistance to cationic antimicrobial peptides (CAMPs) and likely protects M.tuberculosis against the CAMPs produced by competiting microorganisms (bacteriocins). In fact, the modification of anionic phosphatidylglycerol with positively charged L-lysine results in repulsion of the peptides. The chain is Lysylphosphatidylglycerol biosynthesis bifunctional protein LysX (lysX) from Mycolicibacterium gilvum (strain PYR-GCK) (Mycobacterium gilvum (strain PYR-GCK)).